The chain runs to 162 residues: Caveolin-2 (162 aa).

Topologically, residues 1–86 (MGLESEKADV…FEISKYVLYK (86 aa)) are cytoplasmic. Y19 is modified (phosphotyrosine). 3 positions are modified to phosphoserine: S20, S23, and S36. Positions 87-107 (FLTFFLAIPLAFAAGILFAIL) form an intramembrane region, helical. Topologically, residues 108–162 (SCLHIWIIMPFVKTCLMVLPSVQTIWKSVTDVVIAPLCTSVGRSFSSVSLQLSQD) are cytoplasmic.

Belongs to the caveolin family. Monomer or homodimer. Interacts with CAV1; the interaction forms a stable heterooligomeric complex that is required for targeting to lipid rafts and for caveolae formation. Tyrosine phosphorylated forms do not form heterooligomers with the Tyr-19-phosphorylated form existing as a monomer or dimer. Interacts (tyrosine phosphorylated form) with the SH2 domain-containing proteins, RASA1, NCK1 and SRC. Interacts (tyrosine phosphorylated form) with INSR. Interacts (Tyr-19 phosphorylated form) with MAPK1 (phosphorylated form); the interaction, promoted by insulin, leads to nuclear location and MAPK1 activation. Interacts with STAT3; the interaction is increased on insulin-induced tyrosine phosphorylation leading to STAT activation. In terms of processing, phosphorylated on serine and tyrosine residues. CAV1 promotes phosphorylation on Ser-23 which then targets the complex to the plasma membrane, lipid rafts and caveolae. Phosphorylation on Ser-36 appears to modulate mitosis in endothelial cells. Phosphorylation on Tyr-19 is required for insulin-induced phosphorylation of MAPK1 and DNA binding of STAT3. Tyrosine phosphorylation is induced by both EGF and insulin.

It localises to the nucleus. The protein localises to the golgi apparatus membrane. It is found in the cell membrane. The protein resides in the membrane. Its subcellular location is the caveola. In terms of biological role, may act as a scaffolding protein within caveolar membranes. Interacts directly with G-protein alpha subunits and can functionally regulate their activity. Acts as an accessory protein in conjunction with CAV1 in targeting to lipid rafts and driving caveolae formation. The Ser-36 phosphorylated form has a role in modulating mitosis in endothelial cells. Positive regulator of cellular mitogenesis of the MAPK signaling pathway. Required for the insulin-stimulated nuclear translocation and activation of MAPK1 and STAT3, and the subsequent regulation of cell cycle progression. This chain is Caveolin-2 (CAV2), found in Echinops telfairi (Lesser hedgehog tenrec).